Reading from the N-terminus, the 249-residue chain is NAD(P)H-quinone oxidoreductase subunit K 2 (249 aa).

4 residues coordinate [4Fe-4S] cluster: Cys-54, Cys-55, Cys-119, and Cys-150.

It belongs to the complex I 20 kDa subunit family. As to quaternary structure, NDH-1 can be composed of about 15 different subunits; different subcomplexes with different compositions have been identified which probably have different functions. The cofactor is [4Fe-4S] cluster.

It localises to the cell inner membrane. It carries out the reaction a plastoquinone + NADH + (n+1) H(+)(in) = a plastoquinol + NAD(+) + n H(+)(out). The catalysed reaction is a plastoquinone + NADPH + (n+1) H(+)(in) = a plastoquinol + NADP(+) + n H(+)(out). Functionally, NDH-1 shuttles electrons from an unknown electron donor, via FMN and iron-sulfur (Fe-S) centers, to quinones in the respiratory and/or the photosynthetic chain. The immediate electron acceptor for the enzyme in this species is believed to be plastoquinone. Couples the redox reaction to proton translocation, and thus conserves the redox energy in a proton gradient. Cyanobacterial NDH-1 also plays a role in inorganic carbon-concentration. This Gloeobacter violaceus (strain ATCC 29082 / PCC 7421) protein is NAD(P)H-quinone oxidoreductase subunit K 2.